Consider the following 332-residue polypeptide: Thiosulfate-binding protein (332 aa).

The N-terminal stretch at 1 to 22 is a signal peptide; the sequence is MKRLFSASLLAAGLALGGAAHA.

The protein belongs to the prokaryotic sulfate-binding protein family.

Its subcellular location is the periplasm. In terms of biological role, binds thiosulfate specifically and with high affinity. Has no detectable affinity for sulfate. The sequence is that of Thiosulfate-binding protein from Pseudomonas aeruginosa (strain ATCC 15692 / DSM 22644 / CIP 104116 / JCM 14847 / LMG 12228 / 1C / PRS 101 / PAO1).